An 887-amino-acid polypeptide reads, in one-letter code: UPF0182 protein CTC_00086 (887 aa).

7 helical membrane-spanning segments follow: residues Phe9 to Ile29, Phe47 to Leu67, Leu87 to Tyr107, Val146 to Ile166, Gly195 to Ile215, Ile242 to Ile262, and Ile266 to Thr286.

Belongs to the UPF0182 family.

It is found in the cell membrane. The protein is UPF0182 protein CTC_00086 of Clostridium tetani (strain Massachusetts / E88).